We begin with the raw amino-acid sequence, 465 residues long: BTB/POZ and MATH domain-containing protein 4 (465 aa).

The disordered stretch occupies residues 12–40 (LQRQNPLQKSEQQRRNFEMPSPPTTTSLS). The region spanning 46–180 (NGSHSFTIKG…DDCLKINCTV (135 aa)) is the MATH domain. Positions 216–282 (SDITFNVSGE…IYKDALIEDA (67 aa)) constitute a BTB domain. Disordered stretches follow at residues 395 to 429 (SGGGGKTRSVWGQFSDGGAETNGRQAQTWGDINGG) and 441 to 465 (VNANGSGRNNNDNNNSDDPMAELED). The span at 442-458 (NANGSGRNNNDNNNSDD) shows a compositional bias: low complexity.

It belongs to the Tdpoz family. As to quaternary structure, interacts with RAP2-4. Binds to MYB56 at the promoter of FLOWERING LOCUS T (FT). As to expression, ubiquitous.

It is found in the cytoplasm. It participates in protein modification; protein ubiquitination. Its function is as follows. May act as a substrate-specific adapter of an E3 ubiquitin-protein ligase complex (CUL3-RBX1-BTB) which mediates the ubiquitination and subsequent proteasomal degradation of target proteins. The protein is BTB/POZ and MATH domain-containing protein 4 (BPM4) of Arabidopsis thaliana (Mouse-ear cress).